The primary structure comprises 291 residues: uncharacterized protein (291 aa).

Residues 1–82 (MEAEKETEQE…SYSSSPFETH (82 aa)) form a disordered region. Low complexity-rich tracts occupy residues 28–43 (HSHS…ISAS) and 59–78 (STSS…SSSP).

This is an uncharacterized protein from Arabidopsis thaliana (Mouse-ear cress).